The chain runs to 134 residues: Small ribosomal subunit protein uS11 (134 aa).

It belongs to the universal ribosomal protein uS11 family. In terms of assembly, part of the 30S ribosomal subunit. Interacts with proteins S7 and S18. Binds to IF-3.

In terms of biological role, located on the platform of the 30S subunit, it bridges several disparate RNA helices of the 16S rRNA. Forms part of the Shine-Dalgarno cleft in the 70S ribosome. This chain is Small ribosomal subunit protein uS11, found in Leptothrix cholodnii (strain ATCC 51168 / LMG 8142 / SP-6) (Leptothrix discophora (strain SP-6)).